The primary structure comprises 598 residues: Sulfoacetaldehyde acetyltransferase (598 aa).

The protein belongs to the TPP enzyme family. In terms of assembly, homotetramer. Requires Mg(2+) as cofactor. It depends on thiamine diphosphate as a cofactor.

Its subcellular location is the cytoplasm. The catalysed reaction is acetyl phosphate + sulfite + H(+) = sulfoacetaldehyde + phosphate. Its pathway is organosulfur degradation; taurine degradation via aerobic pathway; acetyl phosphate and sulfite from taurine: step 2/2. The protein is Sulfoacetaldehyde acetyltransferase of Castellaniella defragrans (Alcaligenes defragrans).